The following is a 410-amino-acid chain: Protein translocase subunit SecY (410 aa).

9 helical membrane passes run 61-81 (LSVF…IQIL), 106-126 (ITKY…VLRL), 135-155 (LYFI…VMWL), 170-190 (VIIF…QLFV), 195-215 (FLDF…IVFV), 248-268 (QGGV…DYVI), 289-309 (ILFL…YCSL), 349-369 (LFGS…EFVF), and 373-393 (VFKG…IDLI).

It belongs to the SecY/SEC61-alpha family. Component of the plastid Sec protein translocase complex, which is composed of at least SecY and SecE.

The protein localises to the plastid. Its subcellular location is the chloroplast thylakoid membrane. Functionally, the central subunit of the protein translocation channel SecYE. Consists of two halves formed by TMs 1-5 and 6-10. These two domains form a lateral gate at the front which open onto the bilayer between TMs 2 and 7, and are clamped together by SecE at the back. The channel is closed by both a pore ring composed of hydrophobic SecY resides and a short helix (helix 2A) on the extracellular side of the membrane which forms a plug. The chain is Protein translocase subunit SecY from Cyanidium caldarium (Red alga).